We begin with the raw amino-acid sequence, 207 residues long: 3,4-dihydroxy-2-butanone 4-phosphate synthase (207 aa).

D-ribulose 5-phosphate is bound by residues 28–29, Asp33, 140–144, and Glu164; these read RE and RRGHT. Glu29 contacts Mg(2+). A Mg(2+)-binding site is contributed by His143.

It belongs to the DHBP synthase family. Homodimer. Requires Mg(2+) as cofactor. Mn(2+) serves as cofactor.

It catalyses the reaction D-ribulose 5-phosphate = (2S)-2-hydroxy-3-oxobutyl phosphate + formate + H(+). It functions in the pathway cofactor biosynthesis; riboflavin biosynthesis; 2-hydroxy-3-oxobutyl phosphate from D-ribulose 5-phosphate: step 1/1. Functionally, catalyzes the conversion of D-ribulose 5-phosphate to formate and 3,4-dihydroxy-2-butanone 4-phosphate. The polypeptide is 3,4-dihydroxy-2-butanone 4-phosphate synthase (Oceanobacillus iheyensis (strain DSM 14371 / CIP 107618 / JCM 11309 / KCTC 3954 / HTE831)).